The chain runs to 93 residues: Small ribosomal subunit protein uS19 (93 aa).

Residues 74 to 93 (FSPTRTFRGHVKDDRKSKRR) are disordered. Residues 83 to 93 (HVKDDRKSKRR) show a composition bias toward basic and acidic residues.

This sequence belongs to the universal ribosomal protein uS19 family.

In terms of biological role, protein S19 forms a complex with S13 that binds strongly to the 16S ribosomal RNA. This is Small ribosomal subunit protein uS19 from Streptomyces griseus subsp. griseus (strain JCM 4626 / CBS 651.72 / NBRC 13350 / KCC S-0626 / ISP 5235).